The following is a 944-amino-acid chain: Leucine--tRNA ligase (944 aa).

The 'HIGH' region motif lies at 40–51 (PYPSGAGLHVGH). The 'KMSKS' region motif lies at 718–722 (KMSKS). Residue K721 coordinates ATP.

This sequence belongs to the class-I aminoacyl-tRNA synthetase family.

The protein localises to the cytoplasm. The catalysed reaction is tRNA(Leu) + L-leucine + ATP = L-leucyl-tRNA(Leu) + AMP + diphosphate. The polypeptide is Leucine--tRNA ligase (Phocaeicola vulgatus (strain ATCC 8482 / DSM 1447 / JCM 5826 / CCUG 4940 / NBRC 14291 / NCTC 11154) (Bacteroides vulgatus)).